The sequence spans 77 residues: Acyl carrier protein (77 aa).

The region spanning 2–77 is the Carrier domain; the sequence is SNIEERVKKI…AAIDYVSKNQ (76 aa). Residue serine 37 is modified to O-(pantetheine 4'-phosphoryl)serine.

The protein belongs to the acyl carrier protein (ACP) family. 4'-phosphopantetheine is transferred from CoA to a specific serine of apo-ACP by AcpS. This modification is essential for activity because fatty acids are bound in thioester linkage to the sulfhydryl of the prosthetic group.

It is found in the cytoplasm. It functions in the pathway lipid metabolism; fatty acid biosynthesis. Carrier of the growing fatty acid chain in fatty acid biosynthesis. The protein is Acyl carrier protein of Shewanella oneidensis (strain ATCC 700550 / JCM 31522 / CIP 106686 / LMG 19005 / NCIMB 14063 / MR-1).